The following is a 120-amino-acid chain: NAD(P)H-quinone oxidoreductase subunit 3 (120 aa).

The next 3 membrane-spanning stretches (helical) occupy residues 10-30 (LLVFLIVCALLPVLALGASAL), 64-84 (MFALVFVIFDVETVFLYPWAV), and 89-109 (LGLLAFVEALIFIAILVVGLV).

This sequence belongs to the complex I subunit 3 family. As to quaternary structure, NDH-1 can be composed of about 15 different subunits; different subcomplexes with different compositions have been identified which probably have different functions.

It localises to the cellular thylakoid membrane. The enzyme catalyses a plastoquinone + NADH + (n+1) H(+)(in) = a plastoquinol + NAD(+) + n H(+)(out). The catalysed reaction is a plastoquinone + NADPH + (n+1) H(+)(in) = a plastoquinol + NADP(+) + n H(+)(out). In terms of biological role, NDH-1 shuttles electrons from an unknown electron donor, via FMN and iron-sulfur (Fe-S) centers, to quinones in the respiratory and/or the photosynthetic chain. The immediate electron acceptor for the enzyme in this species is believed to be plastoquinone. Couples the redox reaction to proton translocation, and thus conserves the redox energy in a proton gradient. Cyanobacterial NDH-1 also plays a role in inorganic carbon-concentration. The polypeptide is NAD(P)H-quinone oxidoreductase subunit 3 (Synechococcus sp. (strain JA-3-3Ab) (Cyanobacteria bacterium Yellowstone A-Prime)).